The chain runs to 78 residues: Small ribosomal subunit protein bS18 (78 aa).

The protein belongs to the bacterial ribosomal protein bS18 family. Part of the 30S ribosomal subunit. Forms a tight heterodimer with protein bS6.

In terms of biological role, binds as a heterodimer with protein bS6 to the central domain of the 16S rRNA, where it helps stabilize the platform of the 30S subunit. This Lactobacillus delbrueckii subsp. bulgaricus (strain ATCC 11842 / DSM 20081 / BCRC 10696 / JCM 1002 / NBRC 13953 / NCIMB 11778 / NCTC 12712 / WDCM 00102 / Lb 14) protein is Small ribosomal subunit protein bS18.